The sequence spans 333 residues: DNA-directed RNA polymerase subunit alpha (333 aa).

The alpha N-terminal domain (alpha-NTD) stretch occupies residues 1–251; the sequence is MEKLTKIKHR…AHFQTIGDLT (251 aa). Residues 272-333 form an alpha C-terminal domain (alpha-CTD) region; the sequence is DMEIRLLNLS…KLNEYGKLKN (62 aa).

Belongs to the RNA polymerase alpha chain family. Homodimer. The RNAP catalytic core consists of 2 alpha, 1 beta, 1 beta' and 1 omega subunit. When a sigma factor is associated with the core the holoenzyme is formed, which can initiate transcription.

The catalysed reaction is RNA(n) + a ribonucleoside 5'-triphosphate = RNA(n+1) + diphosphate. DNA-dependent RNA polymerase catalyzes the transcription of DNA into RNA using the four ribonucleoside triphosphates as substrates. This Mycoplasmopsis synoviae (strain 53) (Mycoplasma synoviae) protein is DNA-directed RNA polymerase subunit alpha.